Here is a 1227-residue protein sequence, read N- to C-terminus: Anion exchange protein 3 (1227 aa).

A compositionally biased stretch (pro residues) spans 1-11 (MANGVIPPPGG). Disordered regions lie at residues 1-256 (MANG…DEAE), 286-312 (KPSR…KKKK), and 428-497 (NDDK…GDGH). The Cytoplasmic portion of the chain corresponds to 1–707 (MANGVIPPPG…DLRDALHSQC (707 aa)). Over residues 58 to 75 (DPEKPSRSYSERDFEFHR) the composition is skewed to basic and acidic residues. 2 stretches are compositionally biased toward basic residues: residues 76-97 (HTSH…KLRR) and 104-113 (RHTRRKRKKE). A compositionally biased stretch (acidic residues) spans 134–152 (AEEEEEEEEEEEGESEAEP). Residues S167, S170, S175, and S198 each carry the phosphoserine modification. Over residues 194 to 215 (QSDQSPQRSGSSPSPRARASRI) the composition is skewed to low complexity. R294 carries the omega-N-methylarginine modification. Residues 435–448 (FFPRNPSSSSVNSV) show a composition bias toward low complexity. Residues 480–497 (HDPDAKEKPLHMPGGDGH) show a composition bias toward basic and acidic residues. 4 helical membrane passes run 708 to 730 (VAAV…GLLG), 736 to 773 (LMGV…LLVF), 793 to 815 (VWVG…SFLV), and 825 to 846 (IFAF…YKVF). The tract at residues 708-1227 (VAAVLFIYFA…DEYNELHMPV (520 aa)) is membrane (anion exchange). A glycan (N-linked (GlcNAc...) asparagine) is linked at N868. Residues 888-905 (ALLSLILMLGTFLIAFFL) form a helical membrane-spanning segment. The Cytoplasmic segment spans residues 906 to 920 (RKFRNSRFLGGKARR). 5 helical membrane-spanning segments follow: residues 921 to 941 (IIGD…DYSI), 975 to 997 (PFPP…LIFM), 1023 to 1044 (LLLI…LTAA), 1078 to 1123 (VTGV…IQLS), and 1150 to 1186 (MHLF…TVPL). C1160 is lipidated: S-palmitoyl cysteine.

Belongs to the anion exchanger (TC 2.A.31) family. As to expression, expressed in the brain.

The protein localises to the cell membrane. It carries out the reaction hydrogencarbonate(in) + chloride(out) = hydrogencarbonate(out) + chloride(in). Inhibited by 4,4'-diisothiocyanatostilbene-2,2'-disulfonic acid (DIDS). Functionally, sodium-independent anion exchanger which mediates the electroneutral exchange of chloride for bicarbonate ions across the cell membrane. May be involved in the regulation of intracellular pH, and the modulation of cardiac action potential. The chain is Anion exchange protein 3 (Slc4a3) from Mus musculus (Mouse).